The primary structure comprises 1274 residues: Clustered mitochondria protein homolog (1274 aa).

A disordered region spans residues 1-53 (MAQTNGELEHSKGMSSPAVRISQAQKSTKLTVDPESPEQVANGTHAEGEQPEE). TPR repeat units lie at residues 293–326 (SPSF…PNNP), 510–543 (DYGG…KKHP), and 628–661 (AKEA…ERVD). Residues 342-586 (DITRSQENYL…RVTPLDVMWQ (245 aa)) form the Clu domain. 2 disordered regions span residues 631–655 (AAKK…EEAL) and 893–925 (VSNG…ARAA). 4 TPR repeats span residues 998 to 1031 (AKLY…TERT), 1040 to 1073 (ILSY…WKII), 1082 to 1115 (ITTM…CESL), and 1124 to 1157 (ATIL…FLQQ). The segment at 1197-1274 (INMTPRTLGT…KLRGSKKSSA (78 aa)) is disordered. Polar residues predominate over residues 1200-1217 (TPRTLGTRVQPQVGQTAP).

The protein belongs to the CLU family. May associate with the eukaryotic translation initiation factor 3 (eIF-3) complex.

Its subcellular location is the cytoplasm. In terms of biological role, mRNA-binding protein involved in proper cytoplasmic distribution of mitochondria. The chain is Clustered mitochondria protein homolog from Aspergillus terreus (strain NIH 2624 / FGSC A1156).